A 58-amino-acid chain; its full sequence is MLVISNVYPSNLFTLINPFFAKLPEAYAIFDPIVDVMPIIPVFFFLLAFVWQAAVSFR.

A propeptide spanning residues 1-21 is cleaved from the precursor; sequence MLVISNVYPSNLFTLINPFFA. Residues 29–49 form a helical membrane-spanning segment; it reads IFDPIVDVMPIIPVFFFLLAF.

The protein belongs to the PsbK family. In terms of assembly, PSII is composed of 1 copy each of membrane proteins PsbA, PsbB, PsbC, PsbD, PsbE, PsbF, PsbH, PsbI, PsbJ, PsbK, PsbL, PsbM, PsbT, PsbX, PsbY, PsbZ, Psb30/Ycf12, at least 3 peripheral proteins of the oxygen-evolving complex and a large number of cofactors. It forms dimeric complexes.

It is found in the plastid. Its subcellular location is the chloroplast thylakoid membrane. In terms of biological role, one of the components of the core complex of photosystem II (PSII). PSII is a light-driven water:plastoquinone oxidoreductase that uses light energy to abstract electrons from H(2)O, generating O(2) and a proton gradient subsequently used for ATP formation. It consists of a core antenna complex that captures photons, and an electron transfer chain that converts photonic excitation into a charge separation. The chain is Photosystem II reaction center protein K from Psilotum nudum (Whisk fern).